Here is a 603-residue protein sequence, read N- to C-terminus: Baeyer-Villiger monooxygenase (603 aa).

FAD is bound by residues glutamate 94, 102-105 (TWYW), aspartate 114, tyrosine 120, and valine 164. 112-114 (HCD) contacts NADP(+). NADP(+)-binding positions include 248–254 (TGATGVQ), 271–272 (RT), and 386–387 (KR).

It belongs to the FAD-binding monooxygenase family. It depends on FAD as a cofactor.

Catalyzes a Baeyer-Villiger oxidation reaction, i.e. the insertion of an oxygen atom into a carbon-carbon bond adjacent to a carbonyl, which converts ketones to esters or lactones using NADPH and/or NADH as an electron donor. Thus, can convert bicyclo[3.2.0]hept-2-en-6-one into the oxidative lactone products 2-oxabicyclo[3.3.0]oct-6-en-3-one and 3-oxabicyclo[3.3.0]oct-6-en-2-one. Is also able to catalyze the sulfoxidation of methyl phenyl sulfide (thioanisole). This chain is Baeyer-Villiger monooxygenase, found in Streptomyces coelicolor (strain ATCC BAA-471 / A3(2) / M145).